The chain runs to 240 residues: Guanine nucleotide exchange factor sopE2 (240 aa).

Residues 78–240 (LTSKTVKDFM…IANKYLQNAS (163 aa)) are GEF catalytic domain.

It belongs to the GEF (guanine exchange factor) SopE family.

Its subcellular location is the secreted. Activator for CDC42 by directly engaging this Rho GTPase and acting as potent guanine nucleotide exchange factor (GEF). This activation results in actin cytoskeleton rearrangements and stimulates membrane ruffling, promoting bacterial entry into non-phagocytic cells. Also activates NF-kB, p38 and ERK kinases, which are known to be involved in the induction of IL-8 expression. Chaperone InvB is required for secretion, translocation and stabilization of intracellular levels of sopE2. This is Guanine nucleotide exchange factor sopE2 (sopE2) from Salmonella typhimurium (strain LT2 / SGSC1412 / ATCC 700720).